Consider the following 139-residue polypeptide: Ubiquitin-conjugating enzyme spm2 (139 aa).

The UBC core domain occupies 5–139; the sequence is PRNFKLLEEL…PQPPEGSTFF (135 aa).

This sequence belongs to the ubiquitin-conjugating enzyme family. Heterodimer with ubc13.

Has a role in the DNA error-free postreplication repair (PRR) pathway. Lacks catalytic activity by itself. The ubc13/spm2 heterodimer catalyzes the synthesis of non-canonical poly-ubiquitin chains that are linked through 'Lys-63'. This chain is Ubiquitin-conjugating enzyme spm2 (spm2), found in Schizosaccharomyces pombe (strain 972 / ATCC 24843) (Fission yeast).